The primary structure comprises 400 residues: Enoyl-[acyl-carrier-protein] reductase [NADH] (400 aa).

NAD(+) is bound by residues 48-53, 74-75, 111-112, and 139-140; these read GSSSGY, FE, DA, and LA. Tyrosine 225 provides a ligand contact to substrate. The active-site Proton donor is tyrosine 235. Residues lysine 244 and 273-275 contribute to the NAD(+) site; that span reads VVT.

This sequence belongs to the TER reductase family. Monomer.

It catalyses the reaction a 2,3-saturated acyl-[ACP] + NAD(+) = a (2E)-enoyl-[ACP] + NADH + H(+). It functions in the pathway lipid metabolism; fatty acid biosynthesis. Involved in the final reduction of the elongation cycle of fatty acid synthesis (FAS II). Catalyzes the reduction of a carbon-carbon double bond in an enoyl moiety that is covalently linked to an acyl carrier protein (ACP). The protein is Enoyl-[acyl-carrier-protein] reductase [NADH] of Shewanella frigidimarina (strain NCIMB 400).